Reading from the N-terminus, the 174-residue chain is Adipose-secreted signaling protein (174 aa).

At Ala2 the chain carries N-acetylalanine. Thr147 is modified (phosphothreonine).

It belongs to the ADISSP family. As to expression, expression is adipose-specific and highly brown adipose tissue-enriched.

The protein localises to the secreted. Its function is as follows. Adipocyte-secreted protein (adipokine) that acts as a key regulator for white adipose tissue (WAT) thermogenesis and glucose homeostasis at least in part through activation of protein kinase A (PKA). The chain is Adipose-secreted signaling protein from Mus musculus (Mouse).